Here is a 408-residue protein sequence, read N- to C-terminus: NADH-quinone oxidoreductase subunit D (408 aa).

The protein belongs to the complex I 49 kDa subunit family. In terms of assembly, NDH-1 is composed of 14 different subunits. Subunits NuoB, C, D, E, F, and G constitute the peripheral sector of the complex.

It is found in the cell inner membrane. The enzyme catalyses a quinone + NADH + 5 H(+)(in) = a quinol + NAD(+) + 4 H(+)(out). NDH-1 shuttles electrons from NADH, via FMN and iron-sulfur (Fe-S) centers, to quinones in the respiratory chain. The immediate electron acceptor for the enzyme in this species is believed to be ubiquinone. Couples the redox reaction to proton translocation (for every two electrons transferred, four hydrogen ions are translocated across the cytoplasmic membrane), and thus conserves the redox energy in a proton gradient. The sequence is that of NADH-quinone oxidoreductase subunit D from Wolinella succinogenes (strain ATCC 29543 / DSM 1740 / CCUG 13145 / JCM 31913 / LMG 7466 / NCTC 11488 / FDC 602W) (Vibrio succinogenes).